A 142-amino-acid chain; its full sequence is Probable signal recognition particle 19 kDa protein (142 aa).

The segment at 115–142 (KTRQPGYTAPSVASSSAAAAGKKNKKKK) is disordered. Over residues 123–135 (APSVASSSAAAAG) the composition is skewed to low complexity.

The protein belongs to the SRP19 family. In terms of assembly, component of a signal recognition particle complex that consists of a 7SL RNA molecule of 300 nucleotides and six protein subunits: srpa-72, srpa-68, SRP54, F37F2.2/SRP19, F25G6.8/SRP14 and ZK512.4/SRP9.

The protein localises to the cytoplasm. It localises to the nucleus. The protein resides in the nucleolus. Its function is as follows. Component of the signal recognition particle (SRP) complex, a ribonucleoprotein complex that mediates the cotranslational targeting of secretory and membrane proteins to the endoplasmic reticulum (ER). Binds directly to 7SL RNA. Mediates binding of SRP54 to the SRP complex. This is Probable signal recognition particle 19 kDa protein from Caenorhabditis elegans.